The primary structure comprises 235 residues: Orotidine 5'-phosphate decarboxylase (235 aa).

Substrate contacts are provided by residues aspartate 9, lysine 31, 58–67, threonine 121, arginine 180, glutamine 190, glycine 210, and arginine 211; that span reads DLKFHDIPNT. The active-site Proton donor is the lysine 60.

It belongs to the OMP decarboxylase family. Type 1 subfamily. Homodimer.

It catalyses the reaction orotidine 5'-phosphate + H(+) = UMP + CO2. It participates in pyrimidine metabolism; UMP biosynthesis via de novo pathway; UMP from orotate: step 2/2. In terms of biological role, catalyzes the decarboxylation of orotidine 5'-monophosphate (OMP) to uridine 5'-monophosphate (UMP). The polypeptide is Orotidine 5'-phosphate decarboxylase (Nitratidesulfovibrio vulgaris (strain ATCC 29579 / DSM 644 / CCUG 34227 / NCIMB 8303 / VKM B-1760 / Hildenborough) (Desulfovibrio vulgaris)).